Reading from the N-terminus, the 1159-residue chain is ATP-dependent helicase/deoxyribonuclease subunit B (1159 aa).

The 275-residue stretch at 1-275 (MEFNTYIGRA…TYFNTFYRYN (275 aa)) folds into the UvrD-like helicase ATP-binding domain. 8 to 15 (GRAGTGKS) lines the ATP pocket. Positions 269 to 583 (NTFYRYNNDD…SIGTMDLAKV (315 aa)) constitute a UvrD-like helicase C-terminal domain. Residues C784, C1112, C1115, and C1121 each coordinate [4Fe-4S] cluster.

Belongs to the helicase family. AddB/RexB type 1 subfamily. In terms of assembly, heterodimer of AddA and AddB. The cofactor is Mg(2+). It depends on [4Fe-4S] cluster as a cofactor.

Its function is as follows. The heterodimer acts as both an ATP-dependent DNA helicase and an ATP-dependent, dual-direction single-stranded exonuclease. Recognizes the chi site generating a DNA molecule suitable for the initiation of homologous recombination. The AddB subunit has 5' -&gt; 3' nuclease activity but not helicase activity. This chain is ATP-dependent helicase/deoxyribonuclease subunit B, found in Staphylococcus epidermidis (strain ATCC 35984 / DSM 28319 / BCRC 17069 / CCUG 31568 / BM 3577 / RP62A).